We begin with the raw amino-acid sequence, 425 residues long: MASSSPDSPCSCDCFVSVPPASAIPAVIFAKNSDRPRDEVQEVVFVPAGTHTPGSRLQCTYIEVEQVSKTHAVILSRPSWLWGAEMGANEHGVCIGNEAVWTKEPVGEGEALLGMDLLRLALERSSSAQEALHVITGLLEHYGQGGNCLEDAAPFSYHSTFLLADRTEAWVLETAGRLWAAQRIQEGARNISNQLSIGTDISAQHPELRTHAQAKGWWDGQGAFDFAQIFSLTQQPVRMEAAKARFQAGRELLRQRQGGITAEVMMGILRDKESGICMDSGGFRTTASMVSVLPQDPTQPCVHFLTATPDPSRSVFKPFIFGMGVAQAPQVLSPTFGAQDPVRTLPRFQTQVDRRHTLYRGHQAALGLMERDQDRGQQLQQKQQDLEQEGLEATQGLLAGEWAPPLWELGSLFQAFVKRESQAYA.

Cys12 is a catalytic residue. Residue Thr52 is modified to Phosphothreonine.

It belongs to the peptidase C69 family. Secernin subfamily.

The chain is Secernin-2 (SCRN2) from Homo sapiens (Human).